A 577-amino-acid chain; its full sequence is MASILSKKQKKNEKYTLKELKSLGHDLLTSRSHINNLPLLLTFVSPESPPQFVVESLLSLQSFFTPLLSQLPPTSSSPSSTKTEDPEVVFKAWLRSKFDEFVKLLLDVLVSQQSEDSLRGIVLGTLMEFVKLLNAGRFHSSIYHRLLDAIIHSEVDIEIFLDILTSKYFKYIDVRYFTYISMEKFVKTLEASVSADRTVIENNEAESDSKESLELSVRKIYQVLSQIPPPEKQAEKSQHEMWSGSDESISEKPTDKKKKTEKGDSTLLSPATISKRMKLKFTKAWISFLRLPLPIDVYKEVLASIHLTVIPHLSNPTMLCDFLTKSYDIGGVVSVMALSSLFILMTQHGLEYPFFYEKLYALLVPSVFVAKHRAKFLQLLDACLKSSMLPAYLAASFTKKLSRLSLSIPPAGSLVITALIYNLLRRNPTINHLVQEIVENADEANTEAGEHNESQPKTIKKRKLGIDYFNNQESDPKKSGALKSSLWEIDTLRHHYCPPVSRFISSLETNLTIRSKTTEMKIEDFCSGSYATIFGDEIRRRVKQVPLAFYKTVPTSLFADSDFPGWTFTIPQEEGTC.

Residues 230-263 form a disordered region; it reads PEKQAEKSQHEMWSGSDESISEKPTDKKKKTEKG. 3 helical membrane passes run 329–349, 350–370, and 404–424; these read IGGV…TQHG, LEYP…VFVA, and LSLS…YNLL.

This sequence belongs to the CBF/MAK21 family. As to quaternary structure, component of the ribosomal small subunit (SSU) processome composed of at least 40 protein subunits and snoRNA U3. In terms of tissue distribution, mostly expressed in flowers and stems and at lower levels in roots, hypocotyls, siliques, leaves and seeds.

It is found in the nucleus membrane. The protein resides in the nucleus. Its subcellular location is the nucleolus. In terms of biological role, essential protein required during embryogenesis. Involved in nucleolar processing of ribosomal RNA (rRNA) 40S and 90S ribosomal subunits and ribosome assembly; early in ribosome biogenesis, especially required during the maturation of 5.8S rRNA. Has a role in the nuclear export of 40S pre-ribosomal subunit to the cytoplasm. The polypeptide is Protein NUCLEOLAR COMPLEX ASSOCIATED 4 (Arabidopsis thaliana (Mouse-ear cress)).